The primary structure comprises 268 residues: Undecaprenyl-diphosphatase (268 aa).

Helical transmembrane passes span I7–S27, L87–Y107, F116–S136, I146–F166, V187–I207, F210–I230, and S247–M267.

Belongs to the UppP family.

The protein resides in the cell membrane. The enzyme catalyses di-trans,octa-cis-undecaprenyl diphosphate + H2O = di-trans,octa-cis-undecaprenyl phosphate + phosphate + H(+). Its function is as follows. Catalyzes the dephosphorylation of undecaprenyl diphosphate (UPP). Confers resistance to bacitracin. The chain is Undecaprenyl-diphosphatase from Buchnera aphidicola subsp. Baizongia pistaciae (strain Bp).